A 621-amino-acid chain; its full sequence is Chaperone protein HtpG (621 aa).

Residues 1-328 are a; substrate-binding; the sequence is MTQEKKKFDA…SEDLPLNISR (328 aa). Residues 329 to 544 are b; it reads ESLQHNNVLE…DTAMDIRMER (216 aa). The tract at residues 545 to 621 is c; that stretch reads FLIEQKQIAN…LNDILQKAIL (77 aa).

This sequence belongs to the heat shock protein 90 family. As to quaternary structure, homodimer.

It localises to the cytoplasm. In terms of biological role, molecular chaperone. Has ATPase activity. In Rickettsia prowazekii (strain Madrid E), this protein is Chaperone protein HtpG.